The chain runs to 900 residues: Aldos-2-ulose dehydratase (900 aa).

Residues 1 to 433 are dehydratase domain; sequence MYSKVFLKPH…NPSINVFLST (433 aa). Tyr-35 contributes to the ascopyrone M binding site. 5 residues coordinate Mg(2+): Asp-101, Thr-103, Asn-105, Phe-107, and Asp-109. Ascopyrone M is bound by residues Tyr-116, Met-120, His-155, His-215, His-295, and His-337. His-155 acts as the Proton acceptor in catalysis. Zn(2+) contacts are provided by His-215, His-295, His-337, Asp-343, Asp-345, Asp-347, Glu-349, and Glu-351. Residues Tyr-414, Tyr-419, and Ala-627 each contribute to the ascopyrone M site. Positions 434-739 are isomerase domain; the sequence is GILAERLDEE…EFPGFETFST (306 aa). 2 residues coordinate 1,5-anhydro-D-fructose: Ala-627 and His-630. Zn(2+) contacts are provided by His-630, His-632, and Glu-639. Residues Glu-639 and His-641 each coordinate ascopyrone M. His-641 is a 1,5-anhydro-D-fructose binding site. His-709 contributes to the Zn(2+) binding site. Trp-726 serves as a coordination point for ascopyrone M. Residue Trp-726 participates in 1,5-anhydro-D-fructose binding.

In terms of assembly, homodimer. It depends on Zn(2+) as a cofactor.

The enzyme catalyses 1,5-anhydro-D-fructose = microthecin + H2O. It carries out the reaction 1,5-anhydro-D-fructose = ascopyrone M + H2O. The catalysed reaction is ascopyrone M = microthecin. It catalyses the reaction 2-dehydro-D-glucose = cortalcerone + H2O. It participates in carbohydrate metabolism; 1,5-anhydro-D-fructose degradation. A bifunctional enzyme which catalyzes the dehydration of anhydrofructose into ascopyrone M, and the isomerization of ascopyrone M into microthecin. To a lesser extent, can also act on 2-dehydro-D-glucopyranose (D-glucosone), leading to the antibiotic cortalcerone. This chain is Aldos-2-ulose dehydratase, found in Phanerodontia chrysosporium (White-rot fungus).